The chain runs to 214 residues: Octanoyltransferase (214 aa).

One can recognise a BPL/LPL catalytic domain in the interval 34–214 (GVQKELVWLL…KFNEIFSNFN (181 aa)). Substrate contacts are provided by residues 73–80 (RGGKYTYH), 145–147 (AFG), and 158–160 (GVS). C176 acts as the Acyl-thioester intermediate in catalysis.

The protein belongs to the LipB family.

It is found in the cytoplasm. It carries out the reaction octanoyl-[ACP] + L-lysyl-[protein] = N(6)-octanoyl-L-lysyl-[protein] + holo-[ACP] + H(+). It functions in the pathway protein modification; protein lipoylation via endogenous pathway; protein N(6)-(lipoyl)lysine from octanoyl-[acyl-carrier-protein]: step 1/2. Its function is as follows. Catalyzes the transfer of endogenously produced octanoic acid from octanoyl-acyl-carrier-protein onto the lipoyl domains of lipoate-dependent enzymes. Lipoyl-ACP can also act as a substrate although octanoyl-ACP is likely to be the physiological substrate. This is Octanoyltransferase from Ehrlichia chaffeensis (strain ATCC CRL-10679 / Arkansas).